Consider the following 605-residue polypeptide: Heparan-sulfate 6-O-sulfotransferase 2 (605 aa).

At 1–4 (MALP) the chain is on the cytoplasmic side. The tract at residues 1–66 (MALPACAVRE…GVSHGFHTRP (66 aa)) is disordered. A helical; Signal-anchor for type II membrane protein membrane pass occupies residues 5–27 (ACAVREFEPPRQPERGAPVRTTC). Over residues 9 to 18 (REFEPPRQPE) the composition is skewed to basic and acidic residues. Topologically, residues 28-605 (PRRHSRVEAE…DYIGSVEKWR (578 aa)) are lumenal. A glycan (N-linked (GlcNAc...) asparagine) is linked at Asn-209. 233-241 (HIQKTGGTT) lines the 3'-phosphoadenylyl sulfate pocket. Substrate-binding positions include 263 to 264 (KK), Arg-280, Trp-285, and His-290. The active-site Proton acceptor is His-290. Positions 325 and 333 each coordinate 3'-phosphoadenylyl sulfate. Substrate-binding residues include His-337 and Trp-344. Asn-404 carries an N-linked (GlcNAc...) asparagine glycan. Residue 457–459 (TQY) coordinates 3'-phosphoadenylyl sulfate. An N-linked (GlcNAc...) asparagine glycan is attached at Asn-460. 3'-phosphoadenylyl sulfate is bound at residue 463–464 (RA). Residues 530–605 (FQSQGQGQSQ…DYIGSVEKWR (76 aa)) are disordered. Low complexity predominate over residues 531-571 (QSQGQGQSQNPNQNQSQNPNPNANQNLTQNLMQNLTQSLSQ). 5 N-linked (GlcNAc...) asparagine glycosylation sites follow: Asn-544, Asn-556, Asn-564, Asn-589, and Asn-592. The span at 579–597 (KQNSGKEQNDNTSNGTNDY) shows a compositional bias: polar residues.

This sequence belongs to the sulfotransferase 6 family.

It is found in the membrane. The enzyme catalyses alpha-D-glucosaminyl-[heparan sulfate](n) + 3'-phosphoadenylyl sulfate = 6-sulfo-alpha-D-glucosaminyl-[heparan sulfate](n) + adenosine 3',5'-bisphosphate + H(+). Its function is as follows. 6-O-sulfation enzyme which catalyzes the transfer of sulfate from 3'-phosphoadenosine 5'-phosphosulfate (PAPS) to position 6 of the N-sulfoglucosamine residue (GlcNS) of heparan sulfate. This chain is Heparan-sulfate 6-O-sulfotransferase 2, found in Homo sapiens (Human).